The primary structure comprises 379 residues: Junctional adhesion molecule-like (379 aa).

A signal peptide spans 1-20 (MLCLLKLIVIPVILAPVGYP). Residues 21–281 (QGLPGLTVSS…QQGILNGNQL (261 aa)) are Extracellular-facing. Ig-like V-type domains lie at 24–135 (PGLT…KPVE) and 140–250 (PEEP…KTIV). Cysteines 45 and 119 form a disulfide. 3 N-linked (GlcNAc...) asparagine glycosylation sites follow: asparagine 79, asparagine 89, and asparagine 125. Cysteine 158 and cysteine 236 are disulfide-bonded. The chain crosses the membrane as a helical span at residues 282–302 (VIIVGIVCATFLLLPVLILIV). Residues 303-379 (KKAKWNKSSV…SLVRSSVRSK (77 aa)) lie on the Cytoplasmic side of the membrane. Tyrosine 355 is modified (phosphotyrosine).

The protein belongs to the immunoglobulin superfamily. As to quaternary structure, homodimer; active form in leukocyte-endothelial cell adhesion. Interacts (homodimeric form) with CXADR. Interacts (via cytoplasmic domain) with the PI3 kinase; upon CXADR-binding. Interacts with ITGA4 and ITGB1; integrin alpha-4/beta-1 may regulate leukocyte to endothelial cells adhesion by controlling JAML homodimerization. In terms of tissue distribution, expressed by gamma-delta intraepithelial T cells (at protein level).

The protein localises to the cell membrane. It localises to the cell junction. In terms of biological role, transmembrane protein of the plasma membrane of leukocytes that control their migration and activation through interaction with CXADR, a plasma membrane receptor found on adjacent epithelial and endothelial cells. The interaction between both receptors mediates the activation of gamma-delta T-cells, a subpopulation of T-cells residing in epithelia and involved in tissue homeostasis and repair. Upon epithelial CXADR-binding, JAML induces downstream cell signaling events in gamma-delta T-cells through PI3-kinase and MAP kinases. It results in proliferation and production of cytokines and growth factors by T-cells that in turn stimulate epithelial tissues repair. It also controls the transmigration of leukocytes within epithelial and endothelial tissues through adhesive interactions with epithelial and endothelial CXADR. In Mus musculus (Mouse), this protein is Junctional adhesion molecule-like.